The chain runs to 157 residues: MLRISARFYCKIATQSSFKAAEYKNKIKKDKKLNFTQLLHPTKVPQTPVPAAFSDPSENVVEIDTKTIQLLERLSLVDLDSDQALATLKSSIQFADKIAHIDTQNVRPLYTVLEKQQLQLRNDQVTAGDSRAELLRCAKVTDEDYYVSPPGNIPLEQ.

Belongs to the GatC family. As to quaternary structure, subunit of the heterotrimeric GatCAB amidotransferase (AdT) complex, composed of A, B and C subunits.

The protein resides in the mitochondrion. It catalyses the reaction L-glutamyl-tRNA(Gln) + L-glutamine + ATP + H2O = L-glutaminyl-tRNA(Gln) + L-glutamate + ADP + phosphate + H(+). Allows the formation of correctly charged Gln-tRNA(Gln) through the transamidation of misacylated Glu-tRNA(Gln) in the mitochondria. The reaction takes place in the presence of glutamine and ATP through an activated gamma-phospho-Glu-tRNA(Gln). The sequence is that of Glutamyl-tRNA(Gln) amidotransferase subunit C, mitochondrial from Drosophila virilis (Fruit fly).